The sequence spans 421 residues: Ribosomal RNA large subunit methyltransferase G (421 aa).

The disordered stretch occupies residues 389-421 (EPELEQESDLNSKLDANTEVPHPQSALYGKPKA).

Belongs to the methyltransferase superfamily. RlmG family.

Its subcellular location is the cytoplasm. It carries out the reaction guanosine(1835) in 23S rRNA + S-adenosyl-L-methionine = N(2)-methylguanosine(1835) in 23S rRNA + S-adenosyl-L-homocysteine + H(+). In terms of biological role, specifically methylates the guanine in position 1835 (m2G1835) of 23S rRNA. The polypeptide is Ribosomal RNA large subunit methyltransferase G (Shewanella halifaxensis (strain HAW-EB4)).